The chain runs to 558 residues: Factor VII-activating protease (558 aa).

The N-terminal stretch at 1-23 is a signal peptide; it reads MFVRMLVFRVLLLIALVGKSVIG. 3 consecutive EGF-like domains span residues 71–107, 109–146, and 148–186; these read DDDPCQSNPCEHGGDCIIRGDTFSCSCPAPFSGSRCQ, AQNKCKDNPCVHGDCLITQKHPYYRCACKYPYTGPDCS, and VLPACRPNPCQNGGVCSRHRRRSRFTCACPDQYKGKFCE. 18 disulfides stabilise this stretch: C75-C86, C80-C95, C97-C106, C113-C123, C118-C134, C136-C145, C152-C163, C157-C174, C176-C185, C192-C274, C213-C255, C244-C269, C299-C433, C345-C361, C353-C422, C445-C513, C475-C491, and C503-C531. One can recognise a Kringle domain in the interval 191–274; that stretch reads DCYVGDGYSY…KWEYCDVTVC (84 aa). The region spanning 312–553 is the Peptidase S1 domain; that stretch reads IYGGFKSTAG…FLNWIKTTMH (242 aa). Residues H360 and D409 each act as charge relay system in the active site. The Charge relay system role is filled by S507.

Belongs to the peptidase S1 family. As to quaternary structure, heterodimer; disulfide-linked. Heterodimer of a 50 kDa heavy and a 27 kDa light chain linked by a disulfide bond. In terms of processing, proteolytic cleavage at Gly-23 or Met-27 can give rise to the 50 kDa heavy chain (HC) and cleavage at Arg-311 or Lys-317 can give rise to the 27 kDa light chain (LC). The HC can undergo further proteolytic cleavage giving rise to a 26 kDa fragment. The LC can undergo further proteolytic cleavage at Arg-311 leading to a 17-kDa fragment and at Arg-478 leading to a 8-kDa fragment. As to expression, liver and kidney.

The protein localises to the secreted. Cleaves the alpha-chain at multiple sites and the beta-chain between 'Lys-53' and 'Lys-54' but not the gamma-chain of fibrinogen and therefore does not initiate the formation of the fibrin clot and does not cause the fibrinolysis directly. It does not cleave (activate) prothrombin and plasminogen but converts the inactive single chain urinary plasminogen activator (pro-urokinase) to the active two chain form. Activates coagulation factor VII. May function as a tumor suppressor negatively regulating cell proliferation and cell migration. This chain is Factor VII-activating protease, found in Mus musculus (Mouse).